Here is a 311-residue protein sequence, read N- to C-terminus: HPr kinase/phosphorylase (311 aa).

Active-site residues include His138 and Lys159. Residue Gly153–Ser160 participates in ATP binding. Ser160 is a binding site for Mg(2+). Asp177 functions as the Proton acceptor; for phosphorylation activity. Proton donor; for dephosphorylation activity in the catalytic mechanism. Residues Leu201–Asp210 form an important for the catalytic mechanism of both phosphorylation and dephosphorylation region. Residue Glu202 coordinates Mg(2+). The active site involves Arg243. An important for the catalytic mechanism of dephosphorylation region spans residues Pro264–Arg269.

The protein belongs to the HPrK/P family. As to quaternary structure, homohexamer. Requires Mg(2+) as cofactor.

It catalyses the reaction [HPr protein]-L-serine + ATP = [HPr protein]-O-phospho-L-serine + ADP + H(+). The enzyme catalyses [HPr protein]-O-phospho-L-serine + phosphate + H(+) = [HPr protein]-L-serine + diphosphate. In terms of biological role, catalyzes the ATP- as well as the pyrophosphate-dependent phosphorylation of a specific serine residue in HPr, a phosphocarrier protein of the phosphoenolpyruvate-dependent sugar phosphotransferase system (PTS). HprK/P also catalyzes the pyrophosphate-producing, inorganic phosphate-dependent dephosphorylation (phosphorolysis) of seryl-phosphorylated HPr (P-Ser-HPr). The two antagonistic activities of HprK/P are regulated by several intracellular metabolites, which change their concentration in response to the absence or presence of rapidly metabolisable carbon sources (glucose, fructose, etc.) in the growth medium. Therefore, by controlling the phosphorylation state of HPr, HPrK/P is a sensor enzyme that plays a major role in the regulation of carbon metabolism and sugar transport: it mediates carbon catabolite repression (CCR), and regulates PTS-catalyzed carbohydrate uptake and inducer exclusion. In Streptococcus agalactiae serotype Ia (strain ATCC 27591 / A909 / CDC SS700), this protein is HPr kinase/phosphorylase.